A 470-amino-acid chain; its full sequence is Ribosomal protein uS12 methylthiotransferase RimO (470 aa).

Residues 4 to 120 (TRVYLHTLGC…IARVVSDAQA (117 aa)) form the MTTase N-terminal domain. The [4Fe-4S] cluster site is built by Cys-13, Cys-49, Cys-83, Cys-155, Cys-159, and Cys-162. In terms of domain architecture, Radical SAM core spans 141-371 (SLPSHTAYLK…MALQQEISRE (231 aa)). The region spanning 374-442 (RAMVGRRLEV…EYDLVGHVVA (69 aa)) is the TRAM domain. Residues 447-470 (RARRPLPAPAGGETPRRGGLPVVG) are disordered.

The protein belongs to the methylthiotransferase family. RimO subfamily. The cofactor is [4Fe-4S] cluster.

It is found in the cytoplasm. The catalysed reaction is L-aspartate(89)-[ribosomal protein uS12]-hydrogen + (sulfur carrier)-SH + AH2 + 2 S-adenosyl-L-methionine = 3-methylsulfanyl-L-aspartate(89)-[ribosomal protein uS12]-hydrogen + (sulfur carrier)-H + 5'-deoxyadenosine + L-methionine + A + S-adenosyl-L-homocysteine + 2 H(+). Catalyzes the methylthiolation of an aspartic acid residue of ribosomal protein uS12. The polypeptide is Ribosomal protein uS12 methylthiotransferase RimO (Anaeromyxobacter sp. (strain Fw109-5)).